The chain runs to 370 residues: Molybdenum import ATP-binding protein ModC (370 aa).

Positions 1–232 (MLDIDVLRQQ…PDIPDFAAQR (232 aa)) constitute an ABC transporter domain. 30-37 (GRSGAGKT) contributes to the ATP binding site. The 72-residue stretch at 292 to 363 (MVSVQNILAA…IKAMSLLRDE (72 aa)) folds into the Mop domain.

The protein belongs to the ABC transporter superfamily. Molybdate importer (TC 3.A.1.8) family. In terms of assembly, the complex is composed of two ATP-binding proteins (ModC), two transmembrane proteins (ModB) and a solute-binding protein (ModA).

It localises to the cell inner membrane. The enzyme catalyses molybdate(out) + ATP + H2O = molybdate(in) + ADP + phosphate + H(+). In terms of biological role, part of the ABC transporter complex ModABC involved in molybdenum import. Responsible for energy coupling to the transport system. The chain is Molybdenum import ATP-binding protein ModC from Rhodospirillum rubrum (strain ATCC 11170 / ATH 1.1.1 / DSM 467 / LMG 4362 / NCIMB 8255 / S1).